The following is a 209-amino-acid chain: dITP/XTP pyrophosphatase (209 aa).

Position 22-27 (22-27) interacts with substrate; it reads SHNQGK. The active-site Proton acceptor is Asp-83. Residue Asp-83 coordinates Mg(2+). Substrate contacts are provided by residues Ser-84, 167–170, Lys-190, and 195–196; these read FGYD and HR.

This sequence belongs to the HAM1 NTPase family. Homodimer. Mg(2+) is required as a cofactor.

The catalysed reaction is XTP + H2O = XMP + diphosphate + H(+). The enzyme catalyses dITP + H2O = dIMP + diphosphate + H(+). It catalyses the reaction ITP + H2O = IMP + diphosphate + H(+). In terms of biological role, pyrophosphatase that catalyzes the hydrolysis of nucleoside triphosphates to their monophosphate derivatives, with a high preference for the non-canonical purine nucleotides XTP (xanthosine triphosphate), dITP (deoxyinosine triphosphate) and ITP. Seems to function as a house-cleaning enzyme that removes non-canonical purine nucleotides from the nucleotide pool, thus preventing their incorporation into DNA/RNA and avoiding chromosomal lesions. The sequence is that of dITP/XTP pyrophosphatase from Zymomonas mobilis subsp. mobilis (strain ATCC 31821 / ZM4 / CP4).